Consider the following 349-residue polypeptide: Peroxidase 23 (349 aa).

Residues 1 to 29 (MGFSSSLSCSAMGALIVGCLLLQASNSNA) form the signal peptide. Pyrrolidone carboxylic acid is present on Gln30. 4 disulfide bridges follow: Cys40-Cys120, Cys73-Cys78, Cys126-Cys329, and Cys206-Cys238. His71 acts as the Proton acceptor in catalysis. Ca(2+)-binding residues include Asp72, Val75, Gly77, Asp79, and Ser81. N-linked (GlcNAc...) asparagine glycosylation is present at Asn86. Pro168 provides a ligand contact to substrate. A heme b-binding site is contributed by His199. Thr200 lines the Ca(2+) pocket. 2 N-linked (GlcNAc...) asparagine glycosylation sites follow: Asn217 and Asn243. Ca(2+) contacts are provided by Asp251, Thr254, and Asp259.

It belongs to the peroxidase family. Classical plant (class III) peroxidase subfamily. The cofactor is heme b. It depends on Ca(2+) as a cofactor.

It localises to the secreted. The protein localises to the vacuole. It carries out the reaction 2 a phenolic donor + H2O2 = 2 a phenolic radical donor + 2 H2O. Removal of H(2)O(2), oxidation of toxic reductants, biosynthesis and degradation of lignin, suberization, auxin catabolism, response to environmental stresses such as wounding, pathogen attack and oxidative stress. These functions might be dependent on each isozyme/isoform in each plant tissue. This is Peroxidase 23 (PER23) from Arabidopsis thaliana (Mouse-ear cress).